A 472-amino-acid polypeptide reads, in one-letter code: NADH-quinone oxidoreductase subunit N (472 aa).

The next 14 helical transmembrane spans lie at leucine 5–leucine 25, alanine 36–isoleucine 56, isoleucine 77–proline 97, phenylalanine 103–leucine 123, leucine 126–glycine 146, leucine 158–leucine 178, leucine 197–phenylalanine 217, proline 229–valine 249, tryptophan 264–isoleucine 284, methionine 292–methionine 309, isoleucine 319–alanine 339, alanine 363–valine 383, glycine 396–leucine 416, and leucine 441–alanine 461.

It belongs to the complex I subunit 2 family. As to quaternary structure, NDH-1 is composed of 14 different subunits. Subunits NuoA, H, J, K, L, M, N constitute the membrane sector of the complex.

It is found in the cell membrane. It carries out the reaction a quinone + NADH + 5 H(+)(in) = a quinol + NAD(+) + 4 H(+)(out). Functionally, NDH-1 shuttles electrons from NADH, via FMN and iron-sulfur (Fe-S) centers, to quinones in the respiratory chain. The immediate electron acceptor for the enzyme in this species is believed to be a menaquinone. Couples the redox reaction to proton translocation (for every two electrons transferred, four hydrogen ions are translocated across the cytoplasmic membrane), and thus conserves the redox energy in a proton gradient. The polypeptide is NADH-quinone oxidoreductase subunit N (Heliobacterium modesticaldum (strain ATCC 51547 / Ice1)).